A 159-amino-acid chain; its full sequence is UPF0225 protein plu2503 (159 aa).

This sequence belongs to the UPF0225 family.

The protein is UPF0225 protein plu2503 of Photorhabdus laumondii subsp. laumondii (strain DSM 15139 / CIP 105565 / TT01) (Photorhabdus luminescens subsp. laumondii).